Here is a 339-residue protein sequence, read N- to C-terminus: Inositol 2-dehydrogenase 2 (339 aa).

The protein belongs to the Gfo/Idh/MocA family. In terms of assembly, homotetramer.

The enzyme catalyses myo-inositol + NAD(+) = scyllo-inosose + NADH + H(+). In terms of biological role, involved in the oxidation of myo-inositol (MI) to 2-keto-myo-inositol (2KMI or 2-inosose). This Saccharopolyspora erythraea (strain ATCC 11635 / DSM 40517 / JCM 4748 / NBRC 13426 / NCIMB 8594 / NRRL 2338) protein is Inositol 2-dehydrogenase 2.